The chain runs to 213 residues: MKEPLVMYREGFWYLVALGVLTVLGALINFWLGLLVFLLFLFVVFFFRNPRRTIPEDEKAIISPADGVVLDVAEVNESYYLKGPAVKISIFLSIFDVHVNRAPVEGQVEYVYYREGKFLPAFKSHASEINERNYIGIKNPYLQVLVVQITGFIARRIVSFVKPGDILKKGQLLGMIKFGSCTEIYLPKETVEVLVQKGQRVYGGITVIGRIKG.

Ser-180 (schiff-base intermediate with substrate; via pyruvic acid) is an active-site residue. Ser-180 carries the post-translational modification Pyruvic acid (Ser); by autocatalysis.

The protein belongs to the phosphatidylserine decarboxylase family. PSD-A subfamily. As to quaternary structure, heterodimer of a large membrane-associated beta subunit and a small pyruvoyl-containing alpha subunit. Pyruvate serves as cofactor. Post-translationally, is synthesized initially as an inactive proenzyme. Formation of the active enzyme involves a self-maturation process in which the active site pyruvoyl group is generated from an internal serine residue via an autocatalytic post-translational modification. Two non-identical subunits are generated from the proenzyme in this reaction, and the pyruvate is formed at the N-terminus of the alpha chain, which is derived from the carboxyl end of the proenzyme. The post-translation cleavage follows an unusual pathway, termed non-hydrolytic serinolysis, in which the side chain hydroxyl group of the serine supplies its oxygen atom to form the C-terminus of the beta chain, while the remainder of the serine residue undergoes an oxidative deamination to produce ammonia and the pyruvoyl prosthetic group on the alpha chain.

The protein localises to the cell membrane. It carries out the reaction a 1,2-diacyl-sn-glycero-3-phospho-L-serine + H(+) = a 1,2-diacyl-sn-glycero-3-phosphoethanolamine + CO2. The protein operates within phospholipid metabolism; phosphatidylethanolamine biosynthesis; phosphatidylethanolamine from CDP-diacylglycerol: step 2/2. In terms of biological role, catalyzes the formation of phosphatidylethanolamine (PtdEtn) from phosphatidylserine (PtdSer). The chain is Phosphatidylserine decarboxylase proenzyme from Carboxydothermus hydrogenoformans (strain ATCC BAA-161 / DSM 6008 / Z-2901).